The chain runs to 704 residues: Lebercilin (704 aa).

The span at Met1–Lys14 shows a compositional bias: basic and acidic residues. The disordered stretch occupies residues Met1 to Lys80. Ser7 carries the phosphoserine modification. Residues Ser25–Pro40 show a composition bias toward low complexity. Ser48 is subject to Phosphoserine. The segment covering Thr49–Val63 has biased composition (basic and acidic residues). Positions Lys105–Ile300 form a coiled coil. Disordered regions lie at residues Gln389–Glu417 and Glu476–Glu661. Residues Gln404–Glu417 show a composition bias toward basic and acidic residues. Positions Ala448–Asp479 form a coiled coil. Residues Ser496–Thr505 are compositionally biased toward basic and acidic residues. Residues Gly570 to Ser591 show a composition bias toward polar residues. Residues Pro592 to Thr608 show a composition bias toward basic and acidic residues. Over residues Ser617–Ser627 the composition is skewed to low complexity.

It belongs to the LCA5 family. Interacts with NINL. Interacts with OFD1. Interacts with FAM161A. Interacts with components of the IFT complex B. As to expression, detected in several tissues.

It is found in the cytoplasm. It localises to the cytoskeleton. Its subcellular location is the cilium axoneme. The protein resides in the cilium basal body. The protein localises to the cell projection. It is found in the cilium. Functionally, involved in intraflagellar protein (IFT) transport in photoreceptor cilia. This chain is Lebercilin (Lca5), found in Mus musculus (Mouse).